A 230-amino-acid polypeptide reads, in one-letter code: NADH dehydrogenase [ubiquinone] iron-sulfur protein 8, mitochondrial (230 aa).

The N-terminal 42 residues, 1–42 (MAAILARKSLSALRSRQLVLAGQAWQQGANTSNGTLLGTRTF), are a transit peptide targeting the mitochondrion. 2 4Fe-4S ferredoxin-type domains span residues 122–151 (RRYP…IEAE) and 161–190 (TRYD…EGPN). Residues C131, C134, C137, C141, C170, C173, C176, and C180 each contribute to the [4Fe-4S] cluster site.

The protein belongs to the complex I 23 kDa subunit family. Complex I is composed of about 45 different subunits. This is a component of the iron-sulfur (IP) fragment of the enzyme. It depends on [4Fe-4S] cluster as a cofactor.

Its subcellular location is the mitochondrion. The enzyme catalyses a ubiquinone + NADH + 5 H(+)(in) = a ubiquinol + NAD(+) + 4 H(+)(out). Its function is as follows. Core subunit of the mitochondrial membrane respiratory chain NADH dehydrogenase (Complex I) that is believed to belong to the minimal assembly required for catalysis. Complex I functions in the transfer of electrons from NADH to the respiratory chain. The immediate electron acceptor for the enzyme is believed to be ubiquinone. May donate electrons to ubiquinone. The protein is NADH dehydrogenase [ubiquinone] iron-sulfur protein 8, mitochondrial of Nicotiana tabacum (Common tobacco).